Reading from the N-terminus, the 914-residue chain is UPF0182 protein PTH_1387 (914 aa).

7 helical membrane-spanning segments follow: residues 7 to 27, 48 to 68, 109 to 129, 173 to 193, 209 to 229, 252 to 272, and 281 to 301; these read FAAY…IAGA, IIIS…VLLF, LLLL…NFTV, INWV…VVYF, YHFS…YQLE, TLLA…AILI, and LVIY…GIYP.

It belongs to the UPF0182 family.

The protein localises to the cell membrane. The polypeptide is UPF0182 protein PTH_1387 (Pelotomaculum thermopropionicum (strain DSM 13744 / JCM 10971 / SI)).